We begin with the raw amino-acid sequence, 426 residues long: Tetracenomycin polyketide synthase ketoacyl synthase alpha subunit (426 aa).

The region spanning 6–420 (EKRVVITGIG…GFQSAAVLAR (415 aa)) is the Ketosynthase family 3 (KS3) domain. Active-site for beta-ketoacyl synthase activity residues include cysteine 173, histidine 313, and histidine 350.

It belongs to the thiolase-like superfamily. Beta-ketoacyl-ACP synthases family. The tetracenomycin polyketide synthase (TCM PKS) is composed of a ketosynthase complex (TcmKL), an acyl carrier protein (TcmM), a cyclase (TcmN) and a probable second cyclase (TcmJ). TcmK and TcmL form a heterodimeric complex.

It catalyses the reaction 10 malonyl-CoA + 8 H(+) = tetracenomycin F2 + 10 CO2 + 10 CoA + 2 H2O. It participates in antibiotic biosynthesis; tetracenomycin C biosynthesis. In terms of biological role, involved in the biosynthesis of tetracenomycin C (TCM C). Part of a type II polyketide synthase (PKS) that catalyzes the synthesis of tetracenomycin F2 (TCM F2), a precursor of TCM C, from malonyl-CoA. TcmK and TcmL form a heterodimeric alpha-beta complex that catalyzes the condensation reactions between the growing acyl-enzyme chain and the malonyl-CoA extender units. In Streptomyces glaucescens, this protein is Tetracenomycin polyketide synthase ketoacyl synthase alpha subunit.